A 216-amino-acid chain; its full sequence is ATP phosphoribosyltransferase (216 aa).

It belongs to the ATP phosphoribosyltransferase family. Short subfamily. Heteromultimer composed of HisG and HisZ subunits.

It localises to the cytoplasm. It catalyses the reaction 1-(5-phospho-beta-D-ribosyl)-ATP + diphosphate = 5-phospho-alpha-D-ribose 1-diphosphate + ATP. Its pathway is amino-acid biosynthesis; L-histidine biosynthesis; L-histidine from 5-phospho-alpha-D-ribose 1-diphosphate: step 1/9. Its function is as follows. Catalyzes the condensation of ATP and 5-phosphoribose 1-diphosphate to form N'-(5'-phosphoribosyl)-ATP (PR-ATP). Has a crucial role in the pathway because the rate of histidine biosynthesis seems to be controlled primarily by regulation of HisG enzymatic activity. This is ATP phosphoribosyltransferase from Acidovorax ebreus (strain TPSY) (Diaphorobacter sp. (strain TPSY)).